We begin with the raw amino-acid sequence, 346 residues long: Phosphoribosylformylglycinamidine cyclo-ligase (346 aa).

The protein belongs to the AIR synthase family.

The protein resides in the cytoplasm. It carries out the reaction 2-formamido-N(1)-(5-O-phospho-beta-D-ribosyl)acetamidine + ATP = 5-amino-1-(5-phospho-beta-D-ribosyl)imidazole + ADP + phosphate + H(+). The protein operates within purine metabolism; IMP biosynthesis via de novo pathway; 5-amino-1-(5-phospho-D-ribosyl)imidazole from N(2)-formyl-N(1)-(5-phospho-D-ribosyl)glycinamide: step 2/2. The polypeptide is Phosphoribosylformylglycinamidine cyclo-ligase (Shewanella piezotolerans (strain WP3 / JCM 13877)).